A 710-amino-acid chain; its full sequence is Fatty acid oxidation complex subunit alpha (710 aa).

Positions 1–190 (MSMEKTFNLA…KMGLVNDVVP (190 aa)) are enoyl-CoA hydratase. A 3-hydroxyacyl-CoA dehydrogenase region spans residues 310–710 (RKVKKVMVLG…ASDGSQFYKK (401 aa)).

This sequence in the N-terminal section; belongs to the enoyl-CoA hydratase/isomerase family. The protein in the central section; belongs to the 3-hydroxyacyl-CoA dehydrogenase family. Heterotetramer of two alpha chains (FadJ) and two beta chains (FadI).

Its subcellular location is the cytoplasm. The enzyme catalyses a (3S)-3-hydroxyacyl-CoA = a (2E)-enoyl-CoA + H2O. It catalyses the reaction a 4-saturated-(3S)-3-hydroxyacyl-CoA = a (3E)-enoyl-CoA + H2O. It carries out the reaction a (3S)-3-hydroxyacyl-CoA + NAD(+) = a 3-oxoacyl-CoA + NADH + H(+). The catalysed reaction is (3S)-3-hydroxybutanoyl-CoA = (3R)-3-hydroxybutanoyl-CoA. Its pathway is lipid metabolism; fatty acid beta-oxidation. In terms of biological role, catalyzes the formation of a hydroxyacyl-CoA by addition of water on enoyl-CoA. Also exhibits 3-hydroxyacyl-CoA epimerase and 3-hydroxyacyl-CoA dehydrogenase activities. The sequence is that of Fatty acid oxidation complex subunit alpha from Shewanella frigidimarina (strain NCIMB 400).